Consider the following 115-residue polypeptide: Large ribosomal subunit protein uL24 (115 aa).

Residues 49–68 (NMKTKHHPPSKDQEKGSITK) are disordered.

Belongs to the universal ribosomal protein uL24 family. As to quaternary structure, part of the 50S ribosomal subunit.

Functionally, one of two assembly initiator proteins, it binds directly to the 5'-end of the 23S rRNA, where it nucleates assembly of the 50S subunit. Its function is as follows. One of the proteins that surrounds the polypeptide exit tunnel on the outside of the subunit. This chain is Large ribosomal subunit protein uL24, found in Phytoplasma australiense.